Here is a 150-residue protein sequence, read N- to C-terminus: 3-dehydroquinate dehydratase (150 aa).

Tyr26 acts as the Proton acceptor in catalysis. Substrate is bound by residues Asn77, His83, and Asp90. His103 functions as the Proton donor in the catalytic mechanism. Substrate contacts are provided by residues 104–105 (LS) and Arg114.

The protein belongs to the type-II 3-dehydroquinase family. In terms of assembly, homododecamer.

The catalysed reaction is 3-dehydroquinate = 3-dehydroshikimate + H2O. Its pathway is metabolic intermediate biosynthesis; chorismate biosynthesis; chorismate from D-erythrose 4-phosphate and phosphoenolpyruvate: step 3/7. Its function is as follows. Catalyzes a trans-dehydration via an enolate intermediate. The protein is 3-dehydroquinate dehydratase of Citrobacter koseri (strain ATCC BAA-895 / CDC 4225-83 / SGSC4696).